Reading from the N-terminus, the 388-residue chain is S-adenosylmethionine synthase (388 aa).

ATP is bound at residue H16. A Mg(2+)-binding site is contributed by D18. Residue E44 coordinates K(+). E57 and Q100 together coordinate L-methionine. Residues Q100–R110 are flexible loop. ATP is bound by residues D165–K167, D240, R246–K247, A263, and K267. D240 provides a ligand contact to L-methionine. K271 serves as a coordination point for L-methionine.

This sequence belongs to the AdoMet synthase family. As to quaternary structure, homotetramer; dimer of dimers. The cofactor is Mg(2+). K(+) is required as a cofactor.

Its subcellular location is the cytoplasm. The catalysed reaction is L-methionine + ATP + H2O = S-adenosyl-L-methionine + phosphate + diphosphate. It participates in amino-acid biosynthesis; S-adenosyl-L-methionine biosynthesis; S-adenosyl-L-methionine from L-methionine: step 1/1. Its function is as follows. Catalyzes the formation of S-adenosylmethionine (AdoMet) from methionine and ATP. The overall synthetic reaction is composed of two sequential steps, AdoMet formation and the subsequent tripolyphosphate hydrolysis which occurs prior to release of AdoMet from the enzyme. This chain is S-adenosylmethionine synthase, found in Acinetobacter baumannii (strain ACICU).